We begin with the raw amino-acid sequence, 230 residues long: Orotidine 5'-phosphate decarboxylase (230 aa).

Substrate-binding positions include Asp11, Lys34, 61–70 (DLKLHDIPNT), Thr117, Arg179, Gln188, Gly208, and Arg209. Lys63 serves as the catalytic Proton donor.

This sequence belongs to the OMP decarboxylase family. Type 1 subfamily. In terms of assembly, homodimer.

The catalysed reaction is orotidine 5'-phosphate + H(+) = UMP + CO2. It participates in pyrimidine metabolism; UMP biosynthesis via de novo pathway; UMP from orotate: step 2/2. Functionally, catalyzes the decarboxylation of orotidine 5'-monophosphate (OMP) to uridine 5'-monophosphate (UMP). The chain is Orotidine 5'-phosphate decarboxylase from Streptococcus equi subsp. zooepidemicus (strain MGCS10565).